A 226-amino-acid chain; its full sequence is Ribonuclease 3 (226 aa).

The RNase III domain occupies 6 to 128 (INRLQRKLGY…LIGAIFLDSD (123 aa)). Glu41 is a binding site for Mg(2+). The active site involves Asp45. The Mg(2+) site is built by Asp114 and Glu117. Glu117 is an active-site residue. The 71-residue stretch at 155 to 225 (DPKTRLQEYL…AEQALKQLEL (71 aa)) folds into the DRBM domain.

This sequence belongs to the ribonuclease III family. In terms of assembly, homodimer. Mg(2+) serves as cofactor.

It localises to the cytoplasm. The enzyme catalyses Endonucleolytic cleavage to 5'-phosphomonoester.. Its function is as follows. Digests double-stranded RNA. Involved in the processing of primary rRNA transcript to yield the immediate precursors to the large and small rRNAs (23S and 16S). Processes some mRNAs, and tRNAs when they are encoded in the rRNA operon. Processes pre-crRNA and tracrRNA of type II CRISPR loci if present in the organism. This Photorhabdus laumondii subsp. laumondii (strain DSM 15139 / CIP 105565 / TT01) (Photorhabdus luminescens subsp. laumondii) protein is Ribonuclease 3.